Here is a 320-residue protein sequence, read N- to C-terminus: Serpentine receptor class gamma-17 (320 aa).

The next 6 helical transmembrane spans lie at 25–45 (AIYFVTACYLSVGLFCHISLL), 80–100 (IFFGRIFMYIPQLCPFVSTFF), 155–175 (FIMLILPFAGLWNIMISQVIA), 192–212 (WASLSLFQSICILTALGFTIV), 237–257 (FTSISISCTFLLVAGTQLTFA), and 268–288 (YILQFLAFDTFNVGSAIIMFL).

It belongs to the nematode receptor-like protein srg family.

Its subcellular location is the membrane. The polypeptide is Serpentine receptor class gamma-17 (srg-17) (Caenorhabditis elegans).